The primary structure comprises 225 residues: Insulin-induced gene 2 protein (225 aa).

Residues 1–28 (MAEGETESPRPKKRGPYISSVTSQSVNV) are Cytoplasmic-facing. Residues 29-51 (VIRGVVLFFIGVFLALVLNLLQI) form a helical membrane-spanning segment. The Lumenal segment spans residues 52 to 70 (QRNVTLFPPDVITSIFSSA). Residues 71–88 (WWVPPCCGTASAVIGLLY) traverse the membrane as a helical segment. The Cytoplasmic portion of the chain corresponds to 89-103 (PCIDRHLGEPHKFKR). Residues 104-126 (EWSSVMRCVAVFVGINHASAKVD) traverse the membrane as a helical segment. Over 127–129 (FDN) the chain is Lumenal. A helical transmembrane segment spans residues 130 to 148 (NFQFSLTLAALSVGLWWTF). Residues 149-153 (DRSRS) are Cytoplasmic-facing. The residue at position 151 (Ser151) is a Phosphoserine. Residues 154 to 175 (GFGLGVGIAFLATVVTQLLVYN) traverse the membrane as a helical segment. The Lumenal portion of the chain corresponds to 176-189 (GVYQYTSPDFLYVR). The helical transmembrane segment at 190–207 (SWLPCIFFAGGITMGNIG) threads the bilayer. Residues 208 to 225 (RQLAMYECKVIAEKSHQE) are Cytoplasmic-facing. At Cys215 the chain carries Cysteine sulfenic acid (-SOH); alternate. Cys215 is covalently cross-linked (Glycyl cysteine thioester (Cys-Gly) (interchain with G-Cter in ubiquitin); alternate). Positions 219–225 (AEKSHQE) match the KxHxx motif.

The protein belongs to the INSIG family. In terms of assembly, interacts with SCAP; interaction is direct and only takes place in the presence of sterols; it prevents interaction between SCAP and the coat protein complex II (COPII). Associates with the SCAP-SREBP complex (composed of SCAP and SREBF1/SREBP1 or SREBF2/SREBP2); association is mediated via its interaction with SCAP and only takes place in the presence of sterols. Interacts with RNF139. Interacts with RNF145. Phosphorylation at Ser-151 by PCK1 reduces binding to oxysterol, disrupting the interaction between INSIG2 and SCAP, thereby promoting nuclear translocation of SREBP proteins (SREBF1/SREBP1 or SREBF2/SREBP2) and subsequent transcription of downstream lipogenesis-related genes. Post-translationally, polyubiquitinated by AMFR/gp78 at Cys-215 in some tissues such as adipose tissues, undifferentiated myoblasts and liver, leading to its degradation. In differentiated myotubes, Cys-215 oxidation prevents ubiquitination at the same site, resulting in protein stabilization. In terms of processing, oxidized at Cys-215 in differentiated myotubes, preventing ubiquitination at the same site, and resulting in protein stabilization.

It localises to the endoplasmic reticulum membrane. Functionally, oxysterol-binding protein that mediates feedback control of cholesterol synthesis by controlling both endoplasmic reticulum to Golgi transport of SCAP and degradation of HMGCR. Acts as a negative regulator of cholesterol biosynthesis by mediating the retention of the SCAP-SREBP complex in the endoplasmic reticulum, thereby blocking the processing of sterol regulatory element-binding proteins (SREBPs) SREBF1/SREBP1 and SREBF2/SREBP2. Binds oxysterol, including 22-hydroxycholesterol, 24-hydroxycholesterol, 25-hydroxycholesterol and 27-hydroxycholesterol, regulating interaction with SCAP and retention of the SCAP-SREBP complex in the endoplasmic reticulum. In presence of oxysterol, interacts with SCAP, retaining the SCAP-SREBP complex in the endoplasmic reticulum, thereby preventing SCAP from escorting SREBF1/SREBP1 and SREBF2/SREBP2 to the Golgi. Sterol deprivation or phosphorylation by PCK1 reduce oxysterol-binding, disrupting the interaction between INSIG2 and SCAP, thereby promoting Golgi transport of the SCAP-SREBP complex, followed by processing and nuclear translocation of SREBF1/SREBP1 and SREBF2/SREBP2. Also regulates cholesterol synthesis by regulating degradation of HMGCR: initiates the sterol-mediated ubiquitin-mediated endoplasmic reticulum-associated degradation (ERAD) of HMGCR via recruitment of the reductase to the ubiquitin ligase RNF139. In Rattus norvegicus (Rat), this protein is Insulin-induced gene 2 protein.